Reading from the N-terminus, the 147-residue chain is MPLVPKRVKHRREFRGKMRGAAKGGKTVAFGEYGLEALESHWITNRQIEAARVAMTRYMKRGGKVWIRIFPQKSYTAKGVGVRMGSGKGAPAGWVAVVKREKIMFEIGGVSEETAREAMRLAASKLPIKCKFVKREDQEAGGATNED.

Belongs to the universal ribosomal protein uL16 family. Part of the 50S ribosomal subunit.

Functionally, binds 23S rRNA and is also seen to make contacts with the A and possibly P site tRNAs. The protein is Large ribosomal subunit protein uL16 of Lactobacillus delbrueckii subsp. bulgaricus (strain ATCC 11842 / DSM 20081 / BCRC 10696 / JCM 1002 / NBRC 13953 / NCIMB 11778 / NCTC 12712 / WDCM 00102 / Lb 14).